The following is a 529-amino-acid chain: Hyaluronidase PH-20 (529 aa).

Residues 1 to 35 (MGAFTFKHSFFGSFVECSGVLQTVFIFLLIPCCLA) form the signal peptide. Disulfide bonds link cysteine 59/cysteine 351 and cysteine 223/cysteine 237. Residue asparagine 81 is glycosylated (N-linked (GlcNAc...) asparagine). The active-site Proton donor is the glutamate 147. Residues asparagine 165 and asparagine 179 are each glycosylated (N-linked (GlcNAc...) asparagine). N-linked (GlcNAc...) asparagine glycans are attached at residues asparagine 253 and asparagine 368. 3 disulfide bridges follow: cysteine 376–cysteine 387, cysteine 381–cysteine 435, and cysteine 437–cysteine 464. An N-linked (GlcNAc...) asparagine glycan is attached at asparagine 401. The interval 478–502 (DEPPITDDTSQNQDSISDITSSAPP) is disordered. The span at 487–502 (SQNQDSISDITSSAPP) shows a compositional bias: polar residues. Serine 492 carries the GPI-anchor amidated serine lipid modification. Residues 493–529 (ISDITSSAPPSSHILPKDLSWCLFLLSIFSQHWKYLL) constitute a propeptide, removed in mature form.

Belongs to the glycosyl hydrolase 56 family. Endoproteolysis (toward the C-terminus producing two disulfide-linked fragments) could activate PH-20. In terms of tissue distribution, testis.

Its subcellular location is the cell membrane. It carries out the reaction Random hydrolysis of (1-&gt;4)-linkages between N-acetyl-beta-D-glucosamine and D-glucuronate residues in hyaluronate.. Involved in sperm-egg adhesion. Upon fertilization sperm must first penetrate a layer of cumulus cells that surrounds the egg before reaching the zona pellucida. The cumulus cells are embedded in a matrix containing hyaluronic acid which is formed prior to ovulation. This protein aids in penetrating the layer of cumulus cells by digesting hyaluronic acid. The polypeptide is Hyaluronidase PH-20 (SPAM1) (Cavia porcellus (Guinea pig)).